A 486-amino-acid chain; its full sequence is Homoserine O-acetyltransferase (486 aa).

The region spanning 66–436 (NVLVICHALT…PEGHDAFLLE (371 aa)) is the AB hydrolase-1 domain. The Nucleophile role is filled by Ser162. The segment at 248-281 (KFSRRSPSIAQQQKAQREETRKPSTVSEHSLQIH) is disordered. 2 stretches are compositionally biased toward polar residues: residues 250-261 (SRRSPSIAQQQK) and 270-280 (PSTVSEHSLQI). Residues Asp401 and His430 contribute to the active site.

It belongs to the AB hydrolase superfamily. MetX family.

The protein localises to the cytoplasm. The enzyme catalyses L-homoserine + acetyl-CoA = O-acetyl-L-homoserine + CoA. It participates in amino-acid biosynthesis; L-methionine biosynthesis via de novo pathway; O-acetyl-L-homoserine from L-homoserine: step 1/1. Commits homoserine to the methionine biosynthesis pathway by catalyzing its O-acetylation. This is Homoserine O-acetyltransferase (MET2) from Saccharomyces cerevisiae (strain ATCC 204508 / S288c) (Baker's yeast).